An 835-amino-acid polypeptide reads, in one-letter code: Cap-specific mRNA (nucleoside-2'-O-)-methyltransferase 1 (835 aa).

The interval 1-67 (MKRRTDPECT…EGKQHSSDSF (67 aa)) is disordered. Positions 2 to 19 (KRRTDPECTAPIKKQKKR) match the Bipartite nuclear localization signal motif. A phosphoserine mark is found at Ser-28, Ser-31, Ser-53, Ser-66, and Ser-91. Positions 37–54 (SSVSHGAKASTTSLSGSD) are enriched in polar residues. Basic and acidic residues predominate over residues 57 to 67 (TEGKQHSSDSF). The region spanning 87–133 (YNSVSQKLMAKMGFREGEGLGKYSQGRKDIVEASSQKGRRGLGLTLR) is the G-patch domain. Lys-108 carries the post-translational modification N6-acetyllysine. Residues 203–207 (KSVFD) and Arg-218 each bind substrate. The 220-residue stretch at 231–450 (FFLNRAAMKM…ERYVVCKGLK (220 aa)) folds into the RrmJ-type SAM-dependent 2'-O-MTase domain. Asn-234 contacts S-adenosyl-L-methionine. Residue Lys-239 is part of the active site. Residues 277 to 283 (CAGPGGF) and 335 to 336 (DI) contribute to the S-adenosyl-L-methionine site. The active site involves Asp-364. 374 to 376 (NLQ) contributes to the substrate binding site. Lys-404 (proton acceptor) is an active-site residue. Asn-439 contacts substrate. Positions 727–835 (SSGTPKLSYT…VLSFIQMHRA (109 aa)) are interaction with POLR2A. The WW domain maps to 752-786 (RTVNEPWTMGFSKSFKKKFFYNKKTKDSTFDLPAD).

In terms of assembly, interacts with POLR2A (via C-terminus).

Its subcellular location is the nucleus. The catalysed reaction is a 5'-end (N(7)-methyl 5'-triphosphoguanosine)-ribonucleoside in mRNA + S-adenosyl-L-methionine = a 5'-end (N(7)-methyl 5'-triphosphoguanosine)-(2'-O-methyl-ribonucleoside) in mRNA + S-adenosyl-L-homocysteine + H(+). Functionally, S-adenosyl-L-methionine-dependent methyltransferase that mediates mRNA cap1 2'-O-ribose methylation to the 5'-cap structure of mRNAs. Methylates the ribose of the first nucleotide of a m(7)GpppG-capped mRNA and small nuclear RNA (snRNA) to produce m(7)GpppRm (cap1). Displays a preference for cap0 transcripts. Cap1 modification is linked to higher levels of translation. May be involved in the interferon response pathway. This is Cap-specific mRNA (nucleoside-2'-O-)-methyltransferase 1 (CMTR1) from Homo sapiens (Human).